The following is a 2149-amino-acid chain: Polyketide synthase 1 (2149 aa).

The segment at 19–261 (FIFGDQSSCN…TRLAVHAPYH (243 aa)) is N-terminal acylcarrier protein transacylase domain (SAT). The Ketosynthase family 3 (KS3) domain maps to 394–829 (ESKIAIIGMS…GGNTALLVED (436 aa)). Active-site for beta-ketoacyl synthase activity residues include cysteine 566, histidine 701, and histidine 745. Residues 929-1233 (AFVFSGQGSQ…PSLMRNKDGW (305 aa)) are malonyl-CoA:ACP transacylase (MAT) domain. Serine 1018 serves as the catalytic For acyl/malonyl transferase activity. Residues 1310-1624 (TASVHRIVHE…RKVLNTAMPP (315 aa)) form a product template (PT) domain region. An N-terminal hotdog fold region spans residues 1314–1447 (HRIVHESVDK…SSLHFERPKV (134 aa)). Positions 1314 to 1619 (HRIVHESVDK…FQGIPRKVLN (306 aa)) constitute a PKS/mFAS DH domain. Histidine 1346 acts as the Proton acceptor; for dehydratase activity in catalysis. Positions 1474-1619 (LNSRMSSGVI…FQGIPRKVLN (146 aa)) are C-terminal hotdog fold. Catalysis depends on aspartate 1533, which acts as the Proton donor; for dehydratase activity. Positions 1619–1657 (NTAMPPPKSQNEAPVRSAPAKPAAKPPKSASSEHSGHFA) are disordered. Residues 1635-1650 (SAPAKPAAKPPKSASS) show a composition bias toward low complexity. A Carrier 1 domain is found at 1678-1752 (RNPMLAVFKI…DLATHLGLDT (75 aa)). Serine 1712 carries the post-translational modification O-(pantetheine 4'-phosphoryl)serine. Low complexity predominate over residues 1755–1790 (SDQSSGQSSSSGGLSPRSDSIGEITSSATTPPSLSP). The disordered stretch occupies residues 1755-1796 (SDQSSGQSSSSGGLSPRSDSIGEITSSATTPPSLSPRGSVSG). The region spanning 1793–1870 (SVSGSQCKDV…SFKHMFQQGH (78 aa)) is the Carrier 2 domain. Residue serine 1830 is modified to O-(pantetheine 4'-phosphoryl)serine. The interval 1882 to 2147 (LKQYRATSTL…ERVAAFIRST (266 aa)) is thioesterase (TE) domain. The For thioesterase activity role is filled by serine 1973.

Its function is as follows. Polyketide synthase; part of the Pks1 gene cluster that mediates the biosynthesis of an anthraquinone derivative pigment that contributes to conidial pigmentation that provides protection from UV radiation, heat and cold stress. The polyketide synthase Pks1 produces 1-acetyl-2,4,6,8-tetrahydroxy-9,10-anthraquinone though condensation of acetyl-CoA with malonyl-CoA. The dehydratase EthD and the laccase Mlac1 further convert the anthraquinone derivative into the final conidial pigment. The polypeptide is Polyketide synthase 1 (Metarhizium majus (strain ARSEF 297)).